We begin with the raw amino-acid sequence, 77 residues long: Small ribosomal subunit protein uS4 (77 aa).

Residues 45–77 (PFGGGRPGRVKRKNQKAAAKKASGGDGDEEDEE) form a disordered region. Basic residues predominate over residues 52–63 (GRVKRKNQKAAA).

It belongs to the universal ribosomal protein uS4 family.

In Nicotiana tabacum (Common tobacco), this protein is Small ribosomal subunit protein uS4 (RPS9).